The following is a 264-amino-acid chain: 3-deoxy-manno-octulosonate cytidylyltransferase (264 aa).

It belongs to the KdsB family.

Its subcellular location is the cytoplasm. The catalysed reaction is 3-deoxy-alpha-D-manno-oct-2-ulosonate + CTP = CMP-3-deoxy-beta-D-manno-octulosonate + diphosphate. Its pathway is nucleotide-sugar biosynthesis; CMP-3-deoxy-D-manno-octulosonate biosynthesis; CMP-3-deoxy-D-manno-octulosonate from 3-deoxy-D-manno-octulosonate and CTP: step 1/1. It participates in bacterial outer membrane biogenesis; lipopolysaccharide biosynthesis. Activates KDO (a required 8-carbon sugar) for incorporation into bacterial lipopolysaccharide in Gram-negative bacteria. This Methylibium petroleiphilum (strain ATCC BAA-1232 / LMG 22953 / PM1) protein is 3-deoxy-manno-octulosonate cytidylyltransferase.